Reading from the N-terminus, the 580-residue chain is uncharacterized protein (580 aa).

Disordered regions lie at residues 161 to 241 (SFSP…SVND), 256 to 281 (LGSL…SFSD), 325 to 345 (NVSH…QLLK), 472 to 495 (PRDT…DNSD), and 544 to 564 (SAVL…KEVR). Low complexity predominate over residues 192-203 (SNSNSSDTSTDD). 2 stretches are compositionally biased toward polar residues: residues 223 to 241 (THSS…SVND) and 256 to 269 (LGSL…TAQK). Residues 326 to 341 (VSHEEKSHSVQDDKSK) show a composition bias toward basic and acidic residues. Over residues 481 to 495 (PNLSQSGNINSDNSD) the composition is skewed to polar residues.

This is an uncharacterized protein from Schizosaccharomyces pombe (strain 972 / ATCC 24843) (Fission yeast).